A 162-amino-acid polypeptide reads, in one-letter code: D-aminoacyl-tRNA deacylase (162 aa).

The Gly-cisPro motif, important for rejection of L-amino acids motif lies at 143-144; that stretch reads GP.

The protein belongs to the DTD family. As to quaternary structure, homodimer.

It is found in the cytoplasm. The enzyme catalyses glycyl-tRNA(Ala) + H2O = tRNA(Ala) + glycine + H(+). The catalysed reaction is a D-aminoacyl-tRNA + H2O = a tRNA + a D-alpha-amino acid + H(+). Functionally, an aminoacyl-tRNA editing enzyme that deacylates mischarged D-aminoacyl-tRNAs. Also deacylates mischarged glycyl-tRNA(Ala), protecting cells against glycine mischarging by AlaRS. Acts via tRNA-based rather than protein-based catalysis; rejects L-amino acids rather than detecting D-amino acids in the active site. By recycling D-aminoacyl-tRNA to D-amino acids and free tRNA molecules, this enzyme counteracts the toxicity associated with the formation of D-aminoacyl-tRNA entities in vivo and helps enforce protein L-homochirality. In Nitratidesulfovibrio vulgaris (strain ATCC 29579 / DSM 644 / CCUG 34227 / NCIMB 8303 / VKM B-1760 / Hildenborough) (Desulfovibrio vulgaris), this protein is D-aminoacyl-tRNA deacylase.